Consider the following 606-residue polypeptide: NADH-ubiquinone oxidoreductase chain 5 (606 aa).

Helical transmembrane passes span 1–21 (MNMF…PIIM), 43–63 (AFMI…ETIF), 87–107 (MIFV…SMWY), 117–137 (FFKY…ANNM), 140–160 (LFIG…WWYG), 171–191 (AVLY…WFLL), 201–221 (IFIT…LAAT), 241–261 (TPVS…FLLI), 273–293 (IQTL…ICAL), 310–330 (LGLM…LHIC), 365–385 (VLPF…GMPF), 409–429 (LLIT…IMFF), 457–477 (LLIG…PTTI), 488–508 (MTAL…NLTT), and 582–602 (GLIK…LLIL).

It belongs to the complex I subunit 5 family. Core subunit of respiratory chain NADH dehydrogenase (Complex I) which is composed of 45 different subunits.

It localises to the mitochondrion inner membrane. It carries out the reaction a ubiquinone + NADH + 5 H(+)(in) = a ubiquinol + NAD(+) + 4 H(+)(out). Functionally, core subunit of the mitochondrial membrane respiratory chain NADH dehydrogenase (Complex I) which catalyzes electron transfer from NADH through the respiratory chain, using ubiquinone as an electron acceptor. Essential for the catalytic activity and assembly of complex I. The protein is NADH-ubiquinone oxidoreductase chain 5 (MT-ND5) of Canis lupus familiaris (Dog).